The chain runs to 82 residues: Modifier of protein aggregation 4 (82 aa).

The segment covering 1-23 (MTRGNQRDLAREKNQKKLADQKK) has biased composition (basic and acidic residues). Disordered regions lie at residues 1–41 (MTRG…MDAR) and 63–82 (EAAAAAANAKKVAKVDPLKM).

This sequence belongs to the SERF family.

Its subcellular location is the cytoplasm. It is found in the cytosol. The protein resides in the nucleus. Functionally, positive regulator of protein aggregation and age-related proteotoxicity. Induces conformational changes in aggregation-prone proteins, driving them into compact formations preceding the formation of aggregates. The sequence is that of Modifier of protein aggregation 4 from Caenorhabditis elegans.